Here is a 285-residue protein sequence, read N- to C-terminus: MAVQVISGTELAKKTKSEVAGQIRRYISLGRRVPGLAVILVGSDPASQVYVGSKRKSCAEIGIDSKSYDLPETTTEAELLSIIDDLNRNPNVDGILVQLPLPKHIDSTKVIERIAPNKDVDGFHPYNVGRLCQRIPTLRACTPYGIMKLLETTGQDLHGLHAVIVGASNIVGRPMAMELLLAGCTVTVTHRFTRDLEEHVRRADILVVAVGKAEFINGDWIKPGATVIDVGINRGEDGKLRGDVQYAKAAEKAAFITPVPGGVGPMTVAMLMVNTLTAYERHFNA.

NADP(+)-binding positions include 166 to 168 (GAS) and Ile232.

It belongs to the tetrahydrofolate dehydrogenase/cyclohydrolase family. In terms of assembly, homodimer.

It carries out the reaction (6R)-5,10-methylene-5,6,7,8-tetrahydrofolate + NADP(+) = (6R)-5,10-methenyltetrahydrofolate + NADPH. The enzyme catalyses (6R)-5,10-methenyltetrahydrofolate + H2O = (6R)-10-formyltetrahydrofolate + H(+). The protein operates within one-carbon metabolism; tetrahydrofolate interconversion. Catalyzes the oxidation of 5,10-methylenetetrahydrofolate to 5,10-methenyltetrahydrofolate and then the hydrolysis of 5,10-methenyltetrahydrofolate to 10-formyltetrahydrofolate. The polypeptide is Bifunctional protein FolD (Actinobacillus succinogenes (strain ATCC 55618 / DSM 22257 / CCUG 43843 / 130Z)).